A 203-amino-acid polypeptide reads, in one-letter code: Glycerol-3-phosphate acyltransferase (203 aa).

Residues 1 to 3 (MSA) lie on the Periplasmic side of the membrane. Residues 4–24 (IAPGMILFAYLCGSISSAILV) traverse the membrane as a helical segment. The Cytoplasmic segment spans residues 25–52 (CRIAGLPDPRESGSGNPGATNVLRIGGK). A helical transmembrane segment spans residues 53–73 (GAAVAVLIFDILKGMLPVWGA). Residues 74-80 (YALGVTP) are Periplasmic-facing. A helical transmembrane segment spans residues 81 to 101 (FWLGLIAIAACLGHIWPVFFG). The Cytoplasmic segment spans residues 102–111 (FKGGKGVATA). Residues 112-132 (FGAIAPIGWDLTGVMAGTWLL) form a helical membrane-spanning segment. At 133 to 137 (TVLLS) the chain is on the periplasmic side. A helical membrane pass occupies residues 138–158 (GYSSLGAIVSALIAPFYVWWF). The Cytoplasmic portion of the chain corresponds to 159 to 203 (KPQFTFPVSMLSCLILLRHHDNIQRLWRRQETKIWTKLKKKRQKD).

Belongs to the PlsY family. In terms of assembly, probably interacts with PlsX.

It is found in the cell inner membrane. It carries out the reaction sn-glycerol 3-phosphate + an acyl-CoA = a 1-acyl-sn-glycero-3-phosphate + CoA. The catalysed reaction is a fatty acyl-[ACP] + sn-glycerol 3-phosphate = a 1-acyl-sn-glycero-3-phosphate + holo-[ACP]. The protein operates within lipid metabolism; phospholipid metabolism. Its function is as follows. Catalyzes the transfer of an acyl group from acyl-ACP to glycerol-3-phosphate (G3P) to form lysophosphatidic acid (LPA). This enzyme can also utilize acyl-CoA as fatty acyl donor, but not acyl-PO(4). This chain is Glycerol-3-phosphate acyltransferase, found in Salmonella agona (strain SL483).